Reading from the N-terminus, the 309-residue chain is Carbamate kinase-like protein (309 aa).

The segment at 125-144 (NKPVGPFYNTEETARSANPN) is disordered.

The protein belongs to the carbamate kinase family.

The protein is Carbamate kinase-like protein of Mycoplasma pneumoniae (strain ATCC 29342 / M129 / Subtype 1) (Mycoplasmoides pneumoniae).